A 93-amino-acid polypeptide reads, in one-letter code: Probable chloroethene reductive dehalogenase membrane anchor protein (93 aa).

The next 3 helical transmembrane spans lie at Ala-3–Phe-23, Trp-35–Ser-55, and Ser-64–Ala-84.

This sequence belongs to the PceB family.

Its subcellular location is the cell membrane. Functionally, may act as a membrane anchor for the chloroethene reductive dehalogenase VcrA. This chain is Probable chloroethene reductive dehalogenase membrane anchor protein, found in Dehalococcoides mccartyi (strain VS).